The primary structure comprises 304 residues: Cell surface-binding protein OPG105 (304 aa).

This sequence belongs to the alpha-carbonic anhydrase family. In terms of assembly, homodimer; disulfide-linked. Apparently non-glycosylated.

It is found in the virion membrane. Its function is as follows. Binds to chondroitin sulfate on the cell surface to provide virion attachment to target cell. This Monkeypox virus protein is Cell surface-binding protein OPG105 (OPG105).